The following is a 366-amino-acid chain: Reticulon-4-interacting protein 1, mitochondrial (366 aa).

Residues 1-20 (MIEKMILRRFFSTKSSTMRA) constitute a mitochondrion transit peptide.

Belongs to the zinc-containing alcohol dehydrogenase family. Quinone oxidoreductase subfamily. Expressed in pharynx, muscles and intestine.

Its subcellular location is the mitochondrion. In terms of biological role, plays a role in oxygen metabolism in the mitochondria by regulating the levels of reactive oxygen species (ROS) thereby conferring resistance to oxidative stress. Involved in resistance to P.aeruginosa PA14 infection. Regulates lifespan. This Caenorhabditis elegans protein is Reticulon-4-interacting protein 1, mitochondrial.